Here is a 71-residue protein sequence, read N- to C-terminus: uncharacterized protein (71 aa).

This is an uncharacterized protein from Vaccinia virus (strain Western Reserve) (VACV).